The sequence spans 95 residues: Small ribosomal subunit protein uS19 (95 aa).

Belongs to the universal ribosomal protein uS19 family.

Its function is as follows. Protein S19 forms a complex with S13 that binds strongly to the 16S ribosomal RNA. This is Small ribosomal subunit protein uS19 from Syntrophobacter fumaroxidans (strain DSM 10017 / MPOB).